The following is a 185-amino-acid chain: PXMP2/4 family protein 4 (185 aa).

Helical transmembrane passes span 63–83 (MAVF…KYLD), 100–120 (IDQV…MGIL), and 141–161 (VSDC…ISSI).

Belongs to the peroxisomal membrane protein PXMP2/4 family.

The protein resides in the membrane. The protein is PXMP2/4 family protein 4 of Dictyostelium discoideum (Social amoeba).